A 204-amino-acid polypeptide reads, in one-letter code: MEKTKLKIILLGDSGVGKTSLLKRYNDKDFKQLHNSTIYVDLVTKEICIAERQVILQIWDTAGQERFKSLPSRFYRDTDCCVLVYDVNTLKTFESIDNWHDEFIKQANPETPTKFPFVLMGNKTDVNNGKPRVVAKEIADQWCGSKGNIVYFETSAKAKINVEEAFLEIAKKALTNERQIDDMERYRSVVPTIEKETPRSRCSC.

GTP is bound at residue 12–19 (GDSGVGKT). The Effector region motif lies at 34–42 (HNSTIYVDL). GTP is bound by residues 60–64 (DTAGQ), 122–125 (NKTD), and 155–156 (SA). 2 S-geranylgeranyl cysteine lipidation sites follow: Cys-202 and Cys-204. Residue Cys-204 is modified to Cysteine methyl ester.

It belongs to the small GTPase superfamily. Rab family.

It is found in the cell membrane. Intracellular vesicle trafficking and protein transport. This chain is Ras-related protein RABG1 (RABG1), found in Arabidopsis thaliana (Mouse-ear cress).